A 425-amino-acid polypeptide reads, in one-letter code: Trigger factor (425 aa).

The region spanning 158–231 (GDLVRVNMEV…VEEVYKRTLP (74 aa)) is the PPIase FKBP-type domain.

Belongs to the FKBP-type PPIase family. Tig subfamily.

The protein localises to the cytoplasm. It carries out the reaction [protein]-peptidylproline (omega=180) = [protein]-peptidylproline (omega=0). Its function is as follows. Involved in protein export. Acts as a chaperone by maintaining the newly synthesized protein in an open conformation. Functions as a peptidyl-prolyl cis-trans isomerase. This Thermotoga petrophila (strain ATCC BAA-488 / DSM 13995 / JCM 10881 / RKU-1) protein is Trigger factor.